We begin with the raw amino-acid sequence, 311 residues long: MKKTPVVVIVGPTAVGKTKTGIELAKAFDGEIVSGDSVQVYRGMDIGSAKVTKEEAEGIPHHLIDICDPDDAMSVAMFQQLARAAIDDIYARGKLPIIVGGTGLYIRSILYDYEFVERPVDEALREELERLAEVEGREALHQRLVQLDPERAATIHPNNVRRVVRALEVAMQGDTQTTDSAPSEHYDYRLFVLHADREILYDRINQRVDAMMEAGLVEEVERLLAQGYRDTQAMRAIGYKEIIPYVEGKISKDRATDLLKQHTRQFAKRQLTWFRHQFDGIWVDMGRKSFELSYKNIYDDVEGFFRKFRLF.

11-18 (GPTAVGKT) lines the ATP pocket. 13 to 18 (TAVGKT) is a binding site for substrate. The segment at 36-39 (DSVQ) is interaction with substrate tRNA.

Belongs to the IPP transferase family. As to quaternary structure, monomer. Requires Mg(2+) as cofactor.

The catalysed reaction is adenosine(37) in tRNA + dimethylallyl diphosphate = N(6)-dimethylallyladenosine(37) in tRNA + diphosphate. Its function is as follows. Catalyzes the transfer of a dimethylallyl group onto the adenine at position 37 in tRNAs that read codons beginning with uridine, leading to the formation of N6-(dimethylallyl)adenosine (i(6)A). The polypeptide is tRNA dimethylallyltransferase (Exiguobacterium sp. (strain ATCC BAA-1283 / AT1b)).